The primary structure comprises 129 residues: Trefoil factor 2 (129 aa).

The N-terminal stretch at 1 to 23 (MGPRGAPLLVVVLVLGLHALAEG) is a signal peptide. P-type domains follow at residues 29-73 (CRCS…FHPL) and 79-122 (EQCV…FFPQ). 7 cysteine pairs are disulfide-bonded: Cys-29–Cys-127, Cys-31–Cys-58, Cys-42–Cys-57, Cys-52–Cys-69, Cys-81–Cys-107, Cys-91–Cys-106, and Cys-101–Cys-118.

As to expression, expressed in the digestive tract, where it was found predominantly in the stomach with highest expression in the antrum. It is secreted predominantly from antral mucous cells into the lumen of the gastrointestinal tract.

The protein localises to the secreted. Its function is as follows. Inhibits gastrointestinal motility and gastric acid secretion. Could function as a structural component of gastric mucus, possibly by stabilizing glycoproteins in the mucus gel through interactions with carbohydrate side chains. This is Trefoil factor 2 (Tff2) from Rattus norvegicus (Rat).